The primary structure comprises 520 residues: Cyclin-L2 (520 aa).

2 cyclin-like regions span residues 81–183 and 196–280; these read ELIQ…RVLK and KIIV…KILQ. Residues 309-520 are disordered; the sequence is RAKGLLPPGS…DHPGHSRHRR (212 aa). A phosphoserine mark is found at serine 330, serine 337, serine 347, and serine 350. Positions 356-366 are enriched in basic and acidic residues; the sequence is RKMEGPKKAKG. At serine 368 the chain carries Phosphoserine. The RS stretch occupies residues 384–422; it reads RSREQSYSRSPSRSASPKRRKSDSGSTSGGSKSQSRSRS. A compositionally biased stretch (low complexity) spans 407-429; the sequence is SGSTSGGSKSQSRSRSRSDSPPR. Residues 440-453 show a composition bias toward basic and acidic residues; the sequence is SEVRGSRKSKDCKH. Over residues 454 to 471 the composition is skewed to basic residues; the sequence is LTQKPHKSRSRSSSRSRS. 2 stretches are compositionally biased toward basic and acidic residues: residues 472 to 481 and 489 to 514; these read RSRERTDSSG and YYRD…DHPG.

Belongs to the cyclin family. Cyclin L subfamily. In terms of assembly, interacts with CDK11A, CDK11B, CDK12, CDK13 and POLR2A, the hyperphosphorylated C-terminal domain (CTD) of RNA polymerase II. May form a ternary complex with CDK11B and casein kinase II (CKII). Interacts with pre-mRNA-splicing factors, including at least SRSF1, SRSF2 and SRSF7/SLU7.

It localises to the nucleus speckle. Its subcellular location is the nucleus. The protein resides in the nucleoplasm. Involved in pre-mRNA splicing. May induce cell death, possibly by acting on the transcription and RNA processing of apoptosis-related factors. The polypeptide is Cyclin-L2 (Ccnl2) (Rattus norvegicus (Rat)).